A 130-amino-acid polypeptide reads, in one-letter code: Single-stranded DNA-binding protein 1 (130 aa).

The 104-residue stretch at 1-104 folds into the SSB domain; the sequence is MINNVVLIGR…VVAESFQILE (104 aa). The segment at 108-130 is disordered; sequence NTANTSSLADSMPDYGPEPDLPF.

In terms of assembly, homotetramer.

The polypeptide is Single-stranded DNA-binding protein 1 (ssb1) (Streptococcus pyogenes serotype M18 (strain MGAS8232)).